Consider the following 243-residue polypeptide: CD48 antigen (243 aa).

Positions 1–26 (MCSRGWDSCLALELLLLPLSLLVTSI) are cleaved as a signal peptide. Ig-like C2-type domains follow at residues 29-127 (HLVH…KLQV) and 132-212 (PKPV…VCLS). N-linked (GlcNAc...) asparagine glycans are attached at residues asparagine 40, asparagine 44, asparagine 104, asparagine 162, and asparagine 189. A disulfide bond links cysteine 154 and cysteine 196. The GPI-anchor amidated serine moiety is linked to residue serine 220. Residues 221–243 (FGVEWIASWLVVTVPTILGLLLT) constitute a propeptide, removed in mature form.

In terms of assembly, interacts with CD2. Interacts with CD244; this interaction is possible not only on different cells (trans interaction) but also on the same cell (cis interaction). Interacts with LCK. In terms of tissue distribution, widely expressed on all hematopoietic cells.

The protein resides in the cell membrane. The protein localises to the membrane raft. Its subcellular location is the secreted. Functionally, glycosylphosphatidylinositol (GPI)-anchored cell surface glycoprotein that interacts via its N-terminal immunoglobulin domain with cell surface receptors including CD244/2B4 or CD2 to regulate immune cell function and activation. Participates in T-cell signaling transduction by associating with CD2 and efficiently bringing the Src family protein kinase LCK and LAT to the TCR/CD3 complex. In turn, promotes LCK phosphorylation and subsequent activation. Induces the phosphorylation of the cytoplasmic immunoreceptortyrosine switch motifs (ITSMs) of CD244 initiating a series of signaling events that leads to the generation of the immunological synapse and the directed release of cytolytic granules containing perforin and granzymes by T-lymphocytes and NK-cells. The polypeptide is CD48 antigen (CD48) (Homo sapiens (Human)).